The following is a 496-amino-acid chain: MEFVVKSAKASTQKTATLILPLGENCQLGSVAQSVDSASAGALSTALKRGDIQGKPGQTLLLHGLPGLKAERVLLVGTGKADELDSRQWRKVVNAALAVIKNLGGGDAAFAMQDVQVKGRDSYARTRLLVEIVADGQYVFDQFKSKKAEPRALQKIILLCDKAEQAGVERAAREASAIATGMAFTRDLGNLPPNVCHPTFLADQARQLSKAYKGVKLDVLDEKKLRELGAGAFLAVSQGSDQPGCIIVLQYNGGKKGDKPYALVGKGITFDTGGISLKPGLGMDEMKYDMGGGASVLGTLKAVLELQLPINLVCLLACAENMPSGGATRPGDIVTTMSGQTVEILNTDAEGRLVLCDTLTYAERFEPRAVVDVATLTGACIVALGSNTSGLLGNNDELIQQLLQAGESAADRAWQLPLFDEYQEQLDSPFADIANIGGPKAGTITAACFLSRFTKKYPWAHLDIAGTAWTSGGKEKGATGRPVPLLTQYLLDRING.

Positions 266 and 271 each coordinate Mn(2+). Residue K278 is part of the active site. Positions 289, 348, and 350 each coordinate Mn(2+). Residue R352 is part of the active site.

It belongs to the peptidase M17 family. The cofactor is Mn(2+).

The protein localises to the cytoplasm. It catalyses the reaction Release of an N-terminal amino acid, Xaa-|-Yaa-, in which Xaa is preferably Leu, but may be other amino acids including Pro although not Arg or Lys, and Yaa may be Pro. Amino acid amides and methyl esters are also readily hydrolyzed, but rates on arylamides are exceedingly low.. The enzyme catalyses Release of an N-terminal amino acid, preferentially leucine, but not glutamic or aspartic acids.. Functionally, presumably involved in the processing and regular turnover of intracellular proteins. Catalyzes the removal of unsubstituted N-terminal amino acids from various peptides. This Stutzerimonas stutzeri (strain A1501) (Pseudomonas stutzeri) protein is Probable cytosol aminopeptidase.